Reading from the N-terminus, the 373-residue chain is Mannitol-1-phosphate 5-dehydrogenase (373 aa).

3 to 14 (ALHFGAGNIGRG) lines the NAD(+) pocket.

The protein belongs to the mannitol dehydrogenase family.

The enzyme catalyses D-mannitol 1-phosphate + NAD(+) = beta-D-fructose 6-phosphate + NADH + H(+). This Bacillus velezensis (strain DSM 23117 / BGSC 10A6 / LMG 26770 / FZB42) (Bacillus amyloliquefaciens subsp. plantarum) protein is Mannitol-1-phosphate 5-dehydrogenase.